Reading from the N-terminus, the 102-residue chain is Small ribosomal subunit protein uS10 (102 aa).

Belongs to the universal ribosomal protein uS10 family. As to quaternary structure, part of the 30S ribosomal subunit.

Its function is as follows. Involved in the binding of tRNA to the ribosomes. This chain is Small ribosomal subunit protein uS10, found in Rhizobium etli (strain CIAT 652).